We begin with the raw amino-acid sequence, 76 residues long: Putative antitoxin VapB2 (76 aa).

It belongs to the UPF0330 family.

Possibly the antitoxin component of a type II toxin-antitoxin (TA) system. Its cognate toxin is VapC2 (Potential). The polypeptide is Putative antitoxin VapB2 (vapB2) (Pyrococcus abyssi (strain GE5 / Orsay)).